A 330-amino-acid polypeptide reads, in one-letter code: Elongation factor Ts (330 aa).

Residues 79–82 (TDFV) form an involved in Mg(2+) ion dislocation from EF-Tu region.

It belongs to the EF-Ts family.

The protein resides in the cytoplasm. In terms of biological role, associates with the EF-Tu.GDP complex and induces the exchange of GDP to GTP. It remains bound to the aminoacyl-tRNA.EF-Tu.GTP complex up to the GTP hydrolysis stage on the ribosome. The polypeptide is Elongation factor Ts (Bacteroides thetaiotaomicron (strain ATCC 29148 / DSM 2079 / JCM 5827 / CCUG 10774 / NCTC 10582 / VPI-5482 / E50)).